The chain runs to 359 residues: NADH-quinone oxidoreductase subunit H (359 aa).

Transmembrane regions (helical) follow at residues 19 to 39 (IGWFPLGLVIIAAIPLVFIAL), 94 to 114 (FLFVIGPGILFVGSFLAFAVL), 127 to 147 (VGLFYAVGIVAIEVVGILAAG), 166 to 186 (IVSYEIPASIALLCAAMLAGT), 202 to 222 (FMHWFLFTNPIAWLPFLIYFI), 266 to 286 (MFMVSAIISIAFLGGWTSPLP), 301 to 321 (VWGAFWIIMKGFFFIFVQMWL), and 337 to 357 (CWKVLTPFSLIAFVLTAIWVI).

Belongs to the complex I subunit 1 family. As to quaternary structure, NDH-1 is composed of 14 different subunits. Subunits NuoA, H, J, K, L, M, N constitute the membrane sector of the complex.

It localises to the cell inner membrane. The catalysed reaction is a quinone + NADH + 5 H(+)(in) = a quinol + NAD(+) + 4 H(+)(out). Its function is as follows. NDH-1 shuttles electrons from NADH, via FMN and iron-sulfur (Fe-S) centers, to quinones in the respiratory chain. The immediate electron acceptor for the enzyme in this species is believed to be ubiquinone. Couples the redox reaction to proton translocation (for every two electrons transferred, four hydrogen ions are translocated across the cytoplasmic membrane), and thus conserves the redox energy in a proton gradient. This subunit may bind ubiquinone. The protein is NADH-quinone oxidoreductase subunit H of Chlorobaculum parvum (strain DSM 263 / NCIMB 8327) (Chlorobium vibrioforme subsp. thiosulfatophilum).